The following is a 423-amino-acid chain: Structure-specific endonuclease subunit SLX1 (423 aa).

The 83-residue stretch at 23 to 105 folds into the GIY-YIG domain; the sequence is AFYCCYLLRS…QNTKVSRHAD (83 aa). 2 disordered regions span residues 300 to 334 and 365 to 406; these read RRRRQAGTPKGQGLKSVRGRGRGRGHSEDESDALQ and AHRP…LGLQ.

This sequence belongs to the SLX1 family. As to quaternary structure, forms a heterodimer with SLX4. Requires a divalent metal cation as cofactor.

It localises to the nucleus. Its function is as follows. Catalytic subunit of the SLX1-SLX4 structure-specific endonuclease that resolves DNA secondary structures generated during DNA repair and recombination. Has endonuclease activity towards branched DNA substrates, introducing single-strand cuts in duplex DNA close to junctions with ss-DNA. The sequence is that of Structure-specific endonuclease subunit SLX1 from Paracoccidioides brasiliensis (strain Pb03).